The following is a 64-amino-acid chain: Ferredoxin-2 (64 aa).

2 consecutive 4Fe-4S ferredoxin-type domains span residues Lys3 to Ala31 and Tyr34 to Glu64. [4Fe-4S] cluster contacts are provided by Cys12, Cys15, Cys18, and Cys54.

Homodimer. The cofactor is [4Fe-4S] cluster.

Ferredoxins are iron-sulfur proteins that transfer electrons in a wide variety of metabolic reactions. The polypeptide is Ferredoxin-2 (Nitratidesulfovibrio vulgaris (strain DSM 19637 / Miyazaki F) (Desulfovibrio vulgaris)).